The chain runs to 478 residues: Proline--tRNA ligase (478 aa).

It belongs to the class-II aminoacyl-tRNA synthetase family. ProS type 3 subfamily. In terms of assembly, homodimer.

The protein resides in the cytoplasm. The enzyme catalyses tRNA(Pro) + L-proline + ATP = L-prolyl-tRNA(Pro) + AMP + diphosphate. Functionally, catalyzes the attachment of proline to tRNA(Pro) in a two-step reaction: proline is first activated by ATP to form Pro-AMP and then transferred to the acceptor end of tRNA(Pro). The protein is Proline--tRNA ligase of Clostridium botulinum (strain Okra / Type B1).